An 86-amino-acid chain; its full sequence is Neuropeptide precursor capa-1 (86 aa).

Residues 1-19 form the signal peptide; it reads MLLWIVATLLIFSLPVSTA.

Expressed in two pairs of neurons in the anterior part of the nervous system (at protein level).

In terms of biological role, encodes at least three neuropeptides: two of the periviscerokinin family (APHPSSALLVPYPRV-amide and LYMARV-amide) and one pyrokinin (AFFYTPRI-amide). Its function is as follows. Putative ligand for neuromedin U receptor homolog nmur-2. The protein is Neuropeptide precursor capa-1 of Caenorhabditis elegans.